The sequence spans 1553 residues: ABC-type transporter cctS (1553 aa).

A run of 4 helical transmembrane segments spans residues 27–47 (LIPLTACLASAIACLISYFHA), 90–110 (LEVALILAEISIAIFLLIFSG), 114–134 (DLTSVFASAVSSIYLLLILFV), and 151–171 (SVLYTLQWTCLTAIVHAAILG). An N-linked (GlcNAc...) asparagine glycan is attached at Asn-176. 5 helical membrane-spanning segments follow: residues 177–197 (FTIATLVRFALFTFLCLFHWT), 286–306 (LLWQGAWATLNSFAVFVPPVL), 324–344 (TAWLYVTGLLVAGIVAGVAGC), 413–433 (GYLYLVWITFPVQTAIGTYLL), and 438–458 (GISGIVGVALMLGLLPLNILI). The ABC transmembrane type-1 1 domain occupies 293–582 (ATLNSFAVFV…IADAITFLLR (290 aa)). Asn-524 carries an N-linked (GlcNAc...) asparagine glycan. The next 2 helical transmembrane spans lie at 527–547 (TFFSLPLIVTILTLFFYTVVW) and 550–570 (SMGTAVAFPALVIFSILRIPF). N-linked (GlcNAc...) asparagine glycosylation is present at Asn-617. An ABC transporter 1 domain is found at 635-874 (NKRSDIQLTE…GRIDADIMQN (240 aa)). 670–677 (GPSGSGKS) lines the ATP pocket. Asn-725 is a glycosylation site (N-linked (GlcNAc...) asparagine). The helical transmembrane segment at 948-970 (WYWVLVLFMFGIQQFISLATNIW) threads the bilayer. The 305-residue stretch at 951–1255 (VLVLFMFGIQ…FVQLYAIVQQ (305 aa)) folds into the ABC transmembrane type-1 2 domain. N-linked (GlcNAc...) asparagine glycosylation occurs at Asn-992. The chain crosses the membrane as a helical span at residues 1017-1037 (IYVAICLAYAFFTFARDLIVF). A glycan (N-linked (GlcNAc...) asparagine) is linked at Asn-1085. 4 helical membrane passes run 1086-1108 (ISTFSINTLQIAASLVMIIVFIS), 1113-1135 (AFLIAAVFICVAYWFVMTIFING), 1204-1224 (FLGSLILFFTGAFVVWDLESV), and 1229-1249 (AALVLTYAAMFSESIMWFVQL). The 240-residue stretch at 1294 to 1533 (VRFDAYTTRY…DDDGIFRRLC (240 aa)) folds into the ABC transporter 2 domain. 1328 to 1335 (GRTGAGKS) is a binding site for ATP.

The protein belongs to the ABC transporter superfamily.

It localises to the membrane. The protein operates within mycotoxin biosynthesis. ABC-type transporter; part of the gene cluster that mediates the biosynthesis of the mycotoxin cyclochlorotine, a hepatotoxic and carcinogenic cyclic chlorinated pentapeptide. CctS is essential for the biosynthesis of cyclochlorotine, maybe as a chloride channel that supplies chloride for chlorination by cctP2. This is ABC-type transporter cctS from Talaromyces islandicus (Penicillium islandicum).